The chain runs to 90 residues: Large ribosomal subunit protein eL33 (90 aa).

The protein belongs to the eukaryotic ribosomal protein eL33 family.

This chain is Large ribosomal subunit protein eL33, found in Methanopyrus kandleri (strain AV19 / DSM 6324 / JCM 9639 / NBRC 100938).